Here is a 325-residue protein sequence, read N- to C-terminus: Adenine deaminase (325 aa).

Zn(2+) contacts are provided by H8, H10, and H186. E189 serves as the catalytic Proton donor. D267 provides a ligand contact to Zn(2+). D268 provides a ligand contact to substrate.

It belongs to the metallo-dependent hydrolases superfamily. Adenosine and AMP deaminases family. Adenine deaminase type 2 subfamily. Zn(2+) is required as a cofactor.

It carries out the reaction adenine + H2O + H(+) = hypoxanthine + NH4(+). In terms of biological role, catalyzes the hydrolytic deamination of adenine to hypoxanthine. Plays an important role in the purine salvage pathway and in nitrogen catabolism. This Chelativorans sp. (strain BNC1) protein is Adenine deaminase.